Reading from the N-terminus, the 362-residue chain is Probable tocopherol O-methyltransferase, chloroplastic (362 aa).

A chloroplast-targeting transit peptide spans 1 to 55 (MAHAAAATGALAPLHPLLRCTSRHLCASASPRAGLCLHHHRRRRRSSRRTKLAVR). The segment at 141 to 150 (VVDVGCGIGG) is SAM motif I. The tract at residues 204–212 (GQFDLVWSM) is SAM motif II. Positions 231–240 (VAAPGARIII) are SAM motif III.

The protein belongs to the class I-like SAM-binding methyltransferase superfamily. gTMT family.

It localises to the plastid. Its subcellular location is the chloroplast. The catalysed reaction is gamma-tocopherol + S-adenosyl-L-methionine = (+)-alpha-tocopherol + S-adenosyl-L-homocysteine + H(+). It carries out the reaction delta-tocotrienol + S-adenosyl-L-methionine = beta-tocotrienol + S-adenosyl-L-homocysteine + H(+). The enzyme catalyses gamma-tocotrienol + S-adenosyl-L-methionine = alpha-tocotrienol + S-adenosyl-L-homocysteine + H(+). It catalyses the reaction delta-tocopherol + S-adenosyl-L-methionine = beta-tocopherol + S-adenosyl-L-homocysteine + H(+). It functions in the pathway cofactor biosynthesis; tocopherol biosynthesis. Involved in the synthesis of tocopherol (vitamin E). Methylates gamma- and delta-tocopherol to form beta- and alpha-tocopherol, respectively. The polypeptide is Probable tocopherol O-methyltransferase, chloroplastic (VTE4) (Oryza sativa subsp. japonica (Rice)).